A 326-amino-acid polypeptide reads, in one-letter code: Putative nickel insertion protein (326 aa).

The protein belongs to the LarC family.

The polypeptide is Putative nickel insertion protein (Enterococcus faecalis (strain ATCC 700802 / V583)).